A 214-amino-acid chain; its full sequence is Calcineurin B homologous protein 3 (214 aa).

Gly2 carries the N-myristoyl glycine lipid modification. The 36-residue stretch at 110–145 folds into the EF-hand domain; that stretch reads CRTDKLRFLFNMYDSDNDNKITLEEYRKVVEELLSG. Asp123, Asp125, Asp127, Lys129, and Glu134 together coordinate Ca(2+).

The protein belongs to the calcineurin regulatory subunit family. CHP subfamily. Monomer. Homodimer.

Its subcellular location is the nucleus. The protein localises to the cytoplasm. It is found in the membrane. The protein resides in the cell membrane. It localises to the cell projection. Its subcellular location is the lamellipodium. The protein localises to the ruffle membrane. Its function is as follows. Functions as an integral cofactor in cell pH regulation by controlling plasma membrane-type Na(+)/H(+) exchange activity. Promotes the induction of hematopoietic stem cell differentiation toward megakaryocytic lineage. Essential for the coupling of ERK cascade activation with the expression of ETS family genes in megakaryocytic differentiation. Also involved in granulocytic differentiation in a ERK-dependent manner. Inhibits the phosphatase activity of calcineurin. The protein is Calcineurin B homologous protein 3 of Xenopus laevis (African clawed frog).